We begin with the raw amino-acid sequence, 399 residues long: Endonuclease III homolog 1 (399 aa).

The N-terminal 26 residues, 1-26 (MQKISKYSSMAILRKRPLVKTETGPE), are a transit peptide targeting the mitochondrion. The Bipartite nuclear localization signal motif lies at 14–37 (RKRPLVKTETGPESELLPEKRTKI). Lys-194 participates in a covalent cross-link: Glycyl lysine isopeptide (Lys-Gly) (interchain with G-Cter in SUMO). The HhH domain occupies 223-247 (FSSDVPATINELLGLPGVGPKMAYL). Lys-243 serves as the catalytic Nucleophile; for N-glycosylase activity.

The protein belongs to the Nth/MutY family. In terms of processing, monosumoylated. Sumoylation is associated with targeting of NTG1 to nuclei containing oxidative DNA damage.

It localises to the nucleus. The protein resides in the mitochondrion. It catalyses the reaction 2'-deoxyribonucleotide-(2'-deoxyribose 5'-phosphate)-2'-deoxyribonucleotide-DNA = a 3'-end 2'-deoxyribonucleotide-(2,3-dehydro-2,3-deoxyribose 5'-phosphate)-DNA + a 5'-end 5'-phospho-2'-deoxyribonucleoside-DNA + H(+). Its function is as follows. Bifunctional DNA N-glycosylase with associated apurinic/apyrimidinic (AP) lyase function that catalyzes the first step in base excision repair (BER), the primary repair pathway for the repair of oxidative DNA damage. The DNA N-glycosylase activity releases the damaged DNA base from DNA by cleaving the N-glycosidic bond, leaving an AP site. The AP-lyase activity cleaves the phosphodiester bond 3' to the AP site by a beta-elimination. Primarily recognizes and repairs oxidative base damage of pyrimidines, but also purine-derived lesions, alkylation damage and cytosine photoproducts generated by UV irradiation as well as abasic sites. Also has 8-oxoguanine DNA glycosylase activity. The AP lyase can incise AP sites opposite all four bases. May also play a role in the regulation of mtDNA copy number by introducing a double-stranded break (DSB) at the mtDNA replication origin ori5, initiating the rolling-circle mtDNA replication. In Saccharomyces cerevisiae (strain ATCC 204508 / S288c) (Baker's yeast), this protein is Endonuclease III homolog 1.